The chain runs to 1486 residues: Chromosome partition protein MukB (1486 aa).

Residue 34-41 (GGNGAGKS) coordinates ATP. Coiled-coil stretches lie at residues 326–418 (LEAD…QYNQ), 444–480 (LETFQAKELEATEKMLSLEQKMSMAQTAHSQFEQAYQ), and 509–603 (RHLA…RAPV). The segment at 666-783 (PGGSEDQRLN…EVPLFGRAAR (118 aa)) is flexible hinge. 3 coiled-coil regions span residues 835 to 923 (EAEI…AKLE), 977 to 1115 (EMLS…TAKA), and 1209 to 1266 (VEAI…QNVS).

This sequence belongs to the SMC family. MukB subfamily. As to quaternary structure, homodimerization via its hinge domain. Binds to DNA via its C-terminal region. Interacts, and probably forms a ternary complex, with MukE and MukF via its C-terminal region. The complex formation is stimulated by calcium or magnesium. Interacts with tubulin-related protein FtsZ.

It is found in the cytoplasm. The protein localises to the nucleoid. Functionally, plays a central role in chromosome condensation, segregation and cell cycle progression. Functions as a homodimer, which is essential for chromosome partition. Involved in negative DNA supercoiling in vivo, and by this means organize and compact chromosomes. May achieve or facilitate chromosome segregation by condensation DNA from both sides of a centrally located replisome during cell division. This is Chromosome partition protein MukB from Escherichia coli (strain K12 / MC4100 / BW2952).